The chain runs to 555 residues: Protein FAM234A (555 aa).

Basic and acidic residues predominate over residues 1-22 (MMDNKDLEAEIHPLKNEDKKSQ). A disordered region spans residues 1–40 (MMDNKDLEAEIHPLKNEDKKSQENPGNLPRNEDNLKSKPV). At 1–49 (MMDNKDLEAEIHPLKNEDKKSQENPGNLPRNEDNLKSKPVPSRLSRCRT) the chain is on the cytoplasmic side. Ser21 carries the phosphoserine modification. A helical; Signal-anchor for type II membrane protein membrane pass occupies residues 50–70 (VAFFLSLFTCLFVVFVLSFII). Topologically, residues 71–555 (PCPDRPSSQG…FSRLRYRSEM (485 aa)) are extracellular. N-linked (GlcNAc...) asparagine glycosylation is found at Asn116, Asn120, Asn317, Asn392, and Asn476.

This sequence belongs to the FAM234 family.

It localises to the membrane. The sequence is that of Protein FAM234A from Mus musculus (Mouse).